We begin with the raw amino-acid sequence, 354 residues long: MSARTVKLAVIPGDGIGPEVVAEGLKVLSAVAPRHGLTLDTTEYELGAQRWHATGEVLPDAVEEELRQHDAILLGAVGDPTVPSGVLERGLLLRLRFNFSHYVNLRPVRLYPGVTTPLAGVAPEDIDMLVVREGTEGPYAGMGGVLRKGTPHEIATQDSVNTRLGVERVVRYAFAKAAERPCHKLTLVHKDNVLTYAGELWQRVVREVGAEYPQVEVDYLHVDAATMFFVTQPRRFDVVVTDNLFGDIITDLGAAVAGGIGLAASGNINPEGDFPSMFEPVHGSAPDIAGQGKADPTATILSVSLMLEHLGYADAAAQIDQAVAEDLQERAKNGGVRSTTQIGDDIAQRVAEQG.

Residues Arg-96, Arg-106, Arg-132, and Asp-223 each contribute to the substrate site. Mg(2+)-binding residues include Asp-223, Asp-247, and Asp-251. 283–295 (GSAPDIAGQGKAD) serves as a coordination point for NAD(+).

The protein belongs to the isocitrate and isopropylmalate dehydrogenases family. LeuB type 2 subfamily. Homodimer. Requires Mg(2+) as cofactor. It depends on Mn(2+) as a cofactor.

It is found in the cytoplasm. The catalysed reaction is (2R,3S)-3-isopropylmalate + NAD(+) = 4-methyl-2-oxopentanoate + CO2 + NADH. The protein operates within amino-acid biosynthesis; L-leucine biosynthesis; L-leucine from 3-methyl-2-oxobutanoate: step 3/4. Its function is as follows. Catalyzes the oxidation of 3-carboxy-2-hydroxy-4-methylpentanoate (3-isopropylmalate) to 3-carboxy-4-methyl-2-oxopentanoate. The product decarboxylates to 4-methyl-2 oxopentanoate. The chain is 3-isopropylmalate dehydrogenase from Thermobifida fusca (strain YX).